A 231-amino-acid polypeptide reads, in one-letter code: Putative N-acetylmannosamine-6-phosphate 2-epimerase (231 aa).

Belongs to the NanE family.

The enzyme catalyses an N-acyl-D-glucosamine 6-phosphate = an N-acyl-D-mannosamine 6-phosphate. The protein operates within amino-sugar metabolism; N-acetylneuraminate degradation; D-fructose 6-phosphate from N-acetylneuraminate: step 3/5. Converts N-acetylmannosamine-6-phosphate (ManNAc-6-P) to N-acetylglucosamine-6-phosphate (GlcNAc-6-P). The polypeptide is Putative N-acetylmannosamine-6-phosphate 2-epimerase (Glaesserella parasuis serovar 5 (strain SH0165) (Haemophilus parasuis)).